The chain runs to 489 residues: Glutamyl-tRNA(Gln) amidotransferase subunit A (489 aa).

Active-site charge relay system residues include lysine 78 and serine 153. Serine 177 (acyl-ester intermediate) is an active-site residue.

It belongs to the amidase family. GatA subfamily. As to quaternary structure, heterotrimer of A, B and C subunits.

It carries out the reaction L-glutamyl-tRNA(Gln) + L-glutamine + ATP + H2O = L-glutaminyl-tRNA(Gln) + L-glutamate + ADP + phosphate + H(+). In terms of biological role, allows the formation of correctly charged Gln-tRNA(Gln) through the transamidation of misacylated Glu-tRNA(Gln) in organisms which lack glutaminyl-tRNA synthetase. The reaction takes place in the presence of glutamine and ATP through an activated gamma-phospho-Glu-tRNA(Gln). This Enterococcus faecalis (strain ATCC 700802 / V583) protein is Glutamyl-tRNA(Gln) amidotransferase subunit A.